The following is a 548-amino-acid chain: uncharacterized protein (548 aa).

One can recognise a DhaL domain in the interval 8–200 (KLFADMIIQG…LLCVYEGFLK (193 aa)).

This is an uncharacterized protein from Staphylococcus aureus (strain MRSA252).